Here is a 336-residue protein sequence, read N- to C-terminus: Nicotinate-nucleotide--dimethylbenzimidazole phosphoribosyltransferase (336 aa).

A disordered region spans residues Gly-20–Gly-41. Residue Glu-304 is the Proton acceptor of the active site.

Belongs to the CobT family.

The catalysed reaction is 5,6-dimethylbenzimidazole + nicotinate beta-D-ribonucleotide = alpha-ribazole 5'-phosphate + nicotinate + H(+). It participates in nucleoside biosynthesis; alpha-ribazole biosynthesis; alpha-ribazole from 5,6-dimethylbenzimidazole: step 1/2. Functionally, catalyzes the synthesis of alpha-ribazole-5'-phosphate from nicotinate mononucleotide (NAMN) and 5,6-dimethylbenzimidazole (DMB). This is Nicotinate-nucleotide--dimethylbenzimidazole phosphoribosyltransferase from Ruegeria pomeroyi (strain ATCC 700808 / DSM 15171 / DSS-3) (Silicibacter pomeroyi).